The chain runs to 637 residues: 1-deoxy-D-xylulose-5-phosphate synthase (637 aa).

Thiamine diphosphate-binding positions include H88 and 129-131 (GHS). D160 serves as a coordination point for Mg(2+). Residues 161 to 162 (GA), N189, F293, and E370 contribute to the thiamine diphosphate site. Mg(2+) is bound at residue N189.

Belongs to the transketolase family. DXPS subfamily. In terms of assembly, homodimer. Mg(2+) serves as cofactor. Requires thiamine diphosphate as cofactor.

It catalyses the reaction D-glyceraldehyde 3-phosphate + pyruvate + H(+) = 1-deoxy-D-xylulose 5-phosphate + CO2. The protein operates within metabolic intermediate biosynthesis; 1-deoxy-D-xylulose 5-phosphate biosynthesis; 1-deoxy-D-xylulose 5-phosphate from D-glyceraldehyde 3-phosphate and pyruvate: step 1/1. In terms of biological role, catalyzes the acyloin condensation reaction between C atoms 2 and 3 of pyruvate and glyceraldehyde 3-phosphate to yield 1-deoxy-D-xylulose-5-phosphate (DXP). This is 1-deoxy-D-xylulose-5-phosphate synthase from Acinetobacter baumannii (strain AYE).